The primary structure comprises 432 residues: Adenosylmethionine-8-amino-7-oxononanoate aminotransferase (432 aa).

W52 contacts substrate. Residue 112–113 (GS) participates in pyridoxal 5'-phosphate binding. A substrate-binding site is contributed by Y144. D245 provides a ligand contact to pyridoxal 5'-phosphate. The substrate site is built by K274 and G307. An N6-(pyridoxal phosphate)lysine modification is found at K274. Residue 308-309 (PT) coordinates pyridoxal 5'-phosphate. A substrate-binding site is contributed by R391.

It belongs to the class-III pyridoxal-phosphate-dependent aminotransferase family. BioA subfamily. Homodimer. It depends on pyridoxal 5'-phosphate as a cofactor.

It is found in the cytoplasm. The catalysed reaction is (8S)-8-amino-7-oxononanoate + S-adenosyl-L-methionine = S-adenosyl-4-methylsulfanyl-2-oxobutanoate + (7R,8S)-7,8-diammoniononanoate. Its pathway is cofactor biosynthesis; biotin biosynthesis; 7,8-diaminononanoate from 8-amino-7-oxononanoate (SAM route): step 1/1. In terms of biological role, catalyzes the transfer of the alpha-amino group from S-adenosyl-L-methionine (SAM) to 7-keto-8-aminopelargonic acid (KAPA) to form 7,8-diaminopelargonic acid (DAPA). It is the only aminotransferase known to utilize SAM as an amino donor. This is Adenosylmethionine-8-amino-7-oxononanoate aminotransferase from Buchnera aphidicola subsp. Schizaphis graminum (strain Sg).